The following is a 155-amino-acid chain: 6,7-dimethyl-8-ribityllumazine synthase (155 aa).

Residues Phe-23, 57 to 59 (AFE), and 81 to 83 (AVI) each bind 5-amino-6-(D-ribitylamino)uracil. 86 to 87 (ST) contacts (2S)-2-hydroxy-3-oxobutyl phosphate. The active-site Proton donor is His-89. Phe-114 provides a ligand contact to 5-amino-6-(D-ribitylamino)uracil. Arg-128 contacts (2S)-2-hydroxy-3-oxobutyl phosphate.

Belongs to the DMRL synthase family.

The catalysed reaction is (2S)-2-hydroxy-3-oxobutyl phosphate + 5-amino-6-(D-ribitylamino)uracil = 6,7-dimethyl-8-(1-D-ribityl)lumazine + phosphate + 2 H2O + H(+). Its pathway is cofactor biosynthesis; riboflavin biosynthesis; riboflavin from 2-hydroxy-3-oxobutyl phosphate and 5-amino-6-(D-ribitylamino)uracil: step 1/2. Catalyzes the formation of 6,7-dimethyl-8-ribityllumazine by condensation of 5-amino-6-(D-ribitylamino)uracil with 3,4-dihydroxy-2-butanone 4-phosphate. This is the penultimate step in the biosynthesis of riboflavin. This is 6,7-dimethyl-8-ribityllumazine synthase from Pelobacter propionicus (strain DSM 2379 / NBRC 103807 / OttBd1).